Here is a 325-residue protein sequence, read N- to C-terminus: Acetyl-coenzyme A carboxylase carboxyl transferase subunit beta (325 aa).

A CoA carboxyltransferase N-terminal domain is found at 24–293 (LWIKCPDSGH…AEIEVVTPEP (270 aa)).

Belongs to the AccD/PCCB family. In terms of assembly, acetyl-CoA carboxylase is a heterohexamer composed of biotin carboxyl carrier protein (AccB), biotin carboxylase (AccC) and two subunits each of ACCase subunit alpha (AccA) and ACCase subunit beta (AccD).

It localises to the cytoplasm. The catalysed reaction is N(6)-carboxybiotinyl-L-lysyl-[protein] + acetyl-CoA = N(6)-biotinyl-L-lysyl-[protein] + malonyl-CoA. Its pathway is lipid metabolism; malonyl-CoA biosynthesis; malonyl-CoA from acetyl-CoA: step 1/1. Functionally, component of the acetyl coenzyme A carboxylase (ACC) complex. Biotin carboxylase (BC) catalyzes the carboxylation of biotin on its carrier protein (BCCP) and then the CO(2) group is transferred by the transcarboxylase to acetyl-CoA to form malonyl-CoA. The sequence is that of Acetyl-coenzyme A carboxylase carboxyl transferase subunit beta from Rhodopseudomonas palustris (strain BisA53).